We begin with the raw amino-acid sequence, 76 residues long: DNA-directed RNA polymerase subunit epsilon (76 aa).

Belongs to the RNA polymerase subunit epsilon family. As to quaternary structure, RNAP is composed of a core of 2 alpha, a beta and a beta' subunit. The core is associated with a delta subunit, and at least one of epsilon or omega. When a sigma factor is associated with the core the holoenzyme is formed, which can initiate transcription.

It catalyses the reaction RNA(n) + a ribonucleoside 5'-triphosphate = RNA(n+1) + diphosphate. A non-essential component of RNA polymerase (RNAP). This chain is DNA-directed RNA polymerase subunit epsilon, found in Lactococcus lactis subsp. cremoris (strain MG1363).